The chain runs to 150 residues: Large ribosomal subunit protein bL9 (150 aa).

The protein belongs to the bacterial ribosomal protein bL9 family.

Functionally, binds to the 23S rRNA. The protein is Large ribosomal subunit protein bL9 of Lactococcus lactis subsp. cremoris (strain SK11).